Here is a 185-residue protein sequence, read N- to C-terminus: NAD(P)H-dependent FAD/FMN reductase GTNG_3158 (185 aa).

As to quaternary structure, anthranilate 3-monooxygenase consists of a reductase component (GTNG_3158) and an oxygenase component HpaH.

The catalysed reaction is FADH2 + NAD(+) = FAD + NADH + 2 H(+). It catalyses the reaction FADH2 + NADP(+) = FAD + NADPH + 2 H(+). Involved in the pathway of tryptophan degradation. Reduces FAD/FMN to FADH(2)/FMNH(2), which are subsequently used for the hydroxylation of anthranilate. It can reduce either FAD or flavin mononucleotide (FMN) but prefers FAD. The enzyme has a slight preference for NADPH as acceptor. This Geobacillus thermodenitrificans (strain NG80-2) protein is NAD(P)H-dependent FAD/FMN reductase GTNG_3158.